A 61-amino-acid chain; its full sequence is Conotoxin LiC32 (61 aa).

Positions 1–22 (MRCVPVFIILLLLSPSAPSVDA) are cleaved as a signal peptide. Residues 23 to 44 (HPKTKDDVPLASFHDDAKRTLQ) constitute a propeptide that is removed on maturation. C60 carries the cysteine amide modification.

This sequence belongs to the conotoxin T superfamily. Post-translationally, contains 2 disulfide bonds that can be either 'C1-C3, C2-C4' or 'C1-C4, C2-C3', since these disulfide connectivities have been observed for conotoxins with cysteine framework V (for examples, see AC P0DQQ7 and AC P81755). In terms of tissue distribution, expressed by the venom duct.

Its subcellular location is the secreted. Has the ability to interact with the G-protein coupled somatostatin type 3 receptor (SSTR3). The ability was measured in competition binding experiments and the constant of inhibition (Ki) has been evaluated to be 3.5 uM. This Conus lividus (Livid cone) protein is Conotoxin LiC32.